A 110-amino-acid chain; its full sequence is Pathogenesis-related protein (110 aa).

The signal sequence occupies residues 1–19; it reads AFLLAATLTISSHMQEAGA.

The protein belongs to the thaumatin family.

The sequence is that of Pathogenesis-related protein from Juniperus virginiana (Eastern redcedar).